Reading from the N-terminus, the 376-residue chain is Chaperone protein DnaJ (376 aa).

One can recognise a J domain in the interval 5 to 70; the sequence is DFYEVLGVER…SKRAAYDQYG (66 aa). The segment at 135–213 adopts a CR-type zinc-finger fold; that stretch reads GTTVTIRVPT…CHGQGRVEEQ (79 aa). Zn(2+) is bound by residues Cys148, Cys151, Cys165, Cys168, Cys187, Cys190, Cys201, and Cys204. 4 CXXCXGXG motif repeats span residues 148–155, 165–172, 187–194, and 201–208; these read CKTCDGSG, CTTCGGIG, CPRCHGSG, and CGSCHGQG.

Belongs to the DnaJ family. As to quaternary structure, homodimer. It depends on Zn(2+) as a cofactor.

The protein localises to the cytoplasm. Its function is as follows. Participates actively in the response to hyperosmotic and heat shock by preventing the aggregation of stress-denatured proteins and by disaggregating proteins, also in an autonomous, DnaK-independent fashion. Unfolded proteins bind initially to DnaJ; upon interaction with the DnaJ-bound protein, DnaK hydrolyzes its bound ATP, resulting in the formation of a stable complex. GrpE releases ADP from DnaK; ATP binding to DnaK triggers the release of the substrate protein, thus completing the reaction cycle. Several rounds of ATP-dependent interactions between DnaJ, DnaK and GrpE are required for fully efficient folding. Also involved, together with DnaK and GrpE, in the DNA replication of plasmids through activation of initiation proteins. This chain is Chaperone protein DnaJ, found in Stutzerimonas stutzeri (Pseudomonas stutzeri).